Here is a 485-residue protein sequence, read N- to C-terminus: MTITLQQLIALSPLLIVGLTVVVVMLCIAWRRNHFVNATMTVIGLNIALLSLYFVGQAGPTDVTPLLRVDGLSMFYTGLVLLASLATSTFAYPWLQGYPDNRDEFYLLVLIAALGGILLSSANHLASLFIGIELLSLPLFGLVGYAFRQKRSLEASIKYMLLSAAASSFLLFGMALIYAESGDMSFASLGKSLSDHQIHEPLLLAGLGMMIVGLGFKLSLVPFQLWTPDVYQGAPAPVSTFLATAGKIAVFGAVMRLFLYAPMADSESVRIVLGVIAFASILFGNVMAVSQTNIKRLLGYSSIAHLGYLLVALIAVQSHQLALETVGVYLVGYLFSSLGAFGVVSLMSSPYRGPDADSLFSYRGLFWHKPILSAVMTVMMLSLAGIPMTLGFFGKFYVLAVGVNAELWWLTGAVVLGSAIGLYYYLRVMVSLYLTAPQQLQRDTPNNWALTAGGVVVLISSIAVLFFGLYPQPLISLVQLAQPML.

The next 14 membrane-spanning stretches (helical) occupy residues 8–28, 35–55, 75–95, 105–125, 127–147, 159–179, 203–223, 235–255, 271–291, 297–317, 326–346, 374–394, 407–426, and 449–469; these read LIALSPLLIVGLTVVVVMLCI, FVNATMTVIGLNIALLSLYFV, FYTGLVLLASLATSTFAYPWL, FYLLVLIAALGGILLSSANHL, SLFIGIELLSLPLFGLVGYAF, YMLLSAAASSFLLFGMALIYA, LLAGLGMMIVGLGFKLSLVPF, PAPVSTFLATAGKIAVFGAVM, IVLGVIAFASILFGNVMAVSQ, LLGYSSIAHLGYLLVALIAVQ, VGVYLVGYLFSSLGAFGVVSL, AVMTVMMLSLAGIPMTLGFFG, LWWLTGAVVLGSAIGLYYYL, and ALTAGGVVVLISSIAVLFFGL.

The protein belongs to the complex I subunit 2 family. NDH-1 is composed of 13 different subunits. Subunits NuoA, H, J, K, L, M, N constitute the membrane sector of the complex.

It localises to the cell inner membrane. It catalyses the reaction a quinone + NADH + 5 H(+)(in) = a quinol + NAD(+) + 4 H(+)(out). NDH-1 shuttles electrons from NADH, via FMN and iron-sulfur (Fe-S) centers, to quinones in the respiratory chain. The immediate electron acceptor for the enzyme in this species is believed to be ubiquinone. Couples the redox reaction to proton translocation (for every two electrons transferred, four hydrogen ions are translocated across the cytoplasmic membrane), and thus conserves the redox energy in a proton gradient. The chain is NADH-quinone oxidoreductase subunit N from Pectobacterium carotovorum subsp. carotovorum (strain PC1).